The chain runs to 28 residues: Caerulein precursor fragment B1 (28 aa).

It belongs to the gastrin/cholecystokinin family. Expressed by the skin glands.

It localises to the secreted. In terms of biological role, peptide CPF-B1: Has antimicrobial activity against Gram-negative bacteria E.coli ATCC 25922 (MIC=5 uM) and multidrug-resistant A.baumannii (MIC=4-8 uM), against Gram-positive bacteria S.aureus ATCC 25923 (MIC=5 uM) and methicillin-resistant S.aureus and against fungus C.albicans ATCC 90028 (MIC=25 uM). Has some hemolytic activity against human erythrocytes at high concentrations. This is Caerulein precursor fragment B1 from Xenopus borealis (Kenyan clawed frog).